Reading from the N-terminus, the 308-residue chain is tRNA dimethylallyltransferase (308 aa).

11–18 (GSTATGKS) provides a ligand contact to ATP. 13-18 (TATGKS) contacts substrate. The segment at 36 to 39 (DSVQ) is interaction with substrate tRNA.

It belongs to the IPP transferase family. Monomer. Requires Mg(2+) as cofactor.

The enzyme catalyses adenosine(37) in tRNA + dimethylallyl diphosphate = N(6)-dimethylallyladenosine(37) in tRNA + diphosphate. In terms of biological role, catalyzes the transfer of a dimethylallyl group onto the adenine at position 37 in tRNAs that read codons beginning with uridine, leading to the formation of N6-(dimethylallyl)adenosine (i(6)A). This is tRNA dimethylallyltransferase from Bdellovibrio bacteriovorus (strain ATCC 15356 / DSM 50701 / NCIMB 9529 / HD100).